The sequence spans 360 residues: Phospho-N-acetylmuramoyl-pentapeptide-transferase (360 aa).

The next 10 helical transmembrane spans lie at 18–38, 73–93, 97–117, 135–155, 168–188, 199–219, 236–256, 263–283, 288–308, and 339–359; these read VFSY…MMSL, TMGG…WADL, YVWA…VDDY, FWQS…STQA, VLPQ…VGTS, GLAI…AYLT, ASEL…FLWF, VFMG…IAVL, LLLI…ILQV, and IVRF…TLKI.

The protein belongs to the glycosyltransferase 4 family. MraY subfamily. Mg(2+) is required as a cofactor.

The protein resides in the cell inner membrane. The enzyme catalyses UDP-N-acetyl-alpha-D-muramoyl-L-alanyl-gamma-D-glutamyl-meso-2,6-diaminopimeloyl-D-alanyl-D-alanine + di-trans,octa-cis-undecaprenyl phosphate = di-trans,octa-cis-undecaprenyl diphospho-N-acetyl-alpha-D-muramoyl-L-alanyl-D-glutamyl-meso-2,6-diaminopimeloyl-D-alanyl-D-alanine + UMP. Its pathway is cell wall biogenesis; peptidoglycan biosynthesis. Functionally, catalyzes the initial step of the lipid cycle reactions in the biosynthesis of the cell wall peptidoglycan: transfers peptidoglycan precursor phospho-MurNAc-pentapeptide from UDP-MurNAc-pentapeptide onto the lipid carrier undecaprenyl phosphate, yielding undecaprenyl-pyrophosphoryl-MurNAc-pentapeptide, known as lipid I. The chain is Phospho-N-acetylmuramoyl-pentapeptide-transferase from Pseudoalteromonas translucida (strain TAC 125).